Consider the following 413-residue polypeptide: Phosphopentomutase (413 aa).

Mn(2+) contacts are provided by aspartate 11, aspartate 306, histidine 311, aspartate 347, histidine 348, and histidine 359.

Belongs to the phosphopentomutase family. Mn(2+) serves as cofactor.

The protein resides in the cytoplasm. It catalyses the reaction 2-deoxy-alpha-D-ribose 1-phosphate = 2-deoxy-D-ribose 5-phosphate. The catalysed reaction is alpha-D-ribose 1-phosphate = D-ribose 5-phosphate. It functions in the pathway carbohydrate degradation; 2-deoxy-D-ribose 1-phosphate degradation; D-glyceraldehyde 3-phosphate and acetaldehyde from 2-deoxy-alpha-D-ribose 1-phosphate: step 1/2. Its function is as follows. Isomerase that catalyzes the conversion of deoxy-ribose 1-phosphate (dRib-1-P) and ribose 1-phosphate (Rib-1-P) to deoxy-ribose 5-phosphate (dRib-5-P) and ribose 5-phosphate (Rib-5-P), respectively. This chain is Phosphopentomutase, found in Helicobacter acinonychis (strain Sheeba).